The chain runs to 72 residues: Large ribosomal subunit protein uL29 (72 aa).

The protein belongs to the universal ribosomal protein uL29 family.

The polypeptide is Large ribosomal subunit protein uL29 (rpmC) (Treponema pallidum (strain Nichols)).